A 1165-amino-acid polypeptide reads, in one-letter code: Tectonin beta-propeller repeat-containing protein 1 (1165 aa).

TECPR repeat units follow at residues 209 to 240, 254 to 285, 301 to 332, and 344 to 376; these read LSVW…SLLD, DLLW…SIVE, SVVW…IEMV, and DQVW…KAIV. The interval 404 to 486 is disordered; sequence RGSGESAPSD…GPATTPAELP (83 aa). The PH domain occupies 611–717; it reads KTGALQWWCD…WLALLSLSCC (107 aa). Residues 729–756 form a TECPR 5 repeat; the sequence is QAIWSITCKGDIFVSEPSPDLEAHEHPL. Phosphoserine is present on residues Ser-938 and Ser-949. 4 TECPR repeats span residues 953–984, 998–1029, 1044–1075, and 1087–1127; these read IALW…LHVG, YQVW…YHIP, TSVY…EHVS, and DQVW…DYGI. The interval 1140 to 1165 is disordered; the sequence is ATRAPRSSSQEQEPSAPPEAHDPVCC. Positions 1143–1153 are enriched in low complexity; the sequence is APRSSSQEQEP.

It belongs to the TECPR1 family. Interacts with ATG5; the interaction is direct. Interacts with WIPI2. Interacts with the ATG5-ATG12 conjugate, the interaction is however mutually exclusive with ATG16, since it does not interact with ATG12-ATG5-ATG16 complex.

It localises to the cytoplasmic vesicle. It is found in the autophagosome membrane. Its subcellular location is the lysosome membrane. Its function is as follows. Tethering factor involved in autophagy. Involved in autophagosome maturation by promoting the autophagosome fusion with lysosomes: acts by associating with both the ATG5-ATG12 conjugate and phosphatidylinositol-3-phosphate (PtdIns(3)P) present at the surface of autophagosomes. Also involved in selective autophagy against bacterial pathogens, by being required for phagophore/preautophagosomal structure biogenesis and maturation. This Pongo abelii (Sumatran orangutan) protein is Tectonin beta-propeller repeat-containing protein 1 (TECPR1).